Reading from the N-terminus, the 64-residue chain is Large ribosomal subunit protein bL35 (64 aa).

A compositionally biased stretch (basic residues) spans 38–53; that stretch reads KRKANLNAPKHVHHTN. Residues 38–64 are disordered; the sequence is KRKANLNAPKHVHHTNAHSVMSLLCRA.

The protein belongs to the bacterial ribosomal protein bL35 family.

This Helicobacter pylori (strain G27) protein is Large ribosomal subunit protein bL35.